An 89-amino-acid chain; its full sequence is Small ribosomal subunit protein uS19 (89 aa).

The protein belongs to the universal ribosomal protein uS19 family.

Protein S19 forms a complex with S13 that binds strongly to the 16S ribosomal RNA. The protein is Small ribosomal subunit protein uS19 of Xanthomonas axonopodis pv. citri (strain 306).